The chain runs to 678 residues: UvrABC system protein B (678 aa).

Residues 31–417 (ENLNDGLAHQ…KSGTEIIDQV (387 aa)) form the Helicase ATP-binding domain. 44 to 51 (GVTGSGKT) is a binding site for ATP. Positions 97–120 (YYDYYQPEAYVPSSDTFIEKDASI) match the Beta-hairpin motif. One can recognise a Helicase C-terminal domain in the interval 436–602 (QVDDLLSEAR…GLNKKVGELL (167 aa)). Residues 603–625 (DIGQGGSNKSRNKPRSQKAAEPA) are disordered. A UVR domain is found at 638–673 (QQQIKKLEQQMYKFAQDLEFEKAAAIRDQLHKLREQ).

It belongs to the UvrB family. In terms of assembly, forms a heterotetramer with UvrA during the search for lesions. Interacts with UvrC in an incision complex.

Its subcellular location is the cytoplasm. Its function is as follows. The UvrABC repair system catalyzes the recognition and processing of DNA lesions. A damage recognition complex composed of 2 UvrA and 2 UvrB subunits scans DNA for abnormalities. Upon binding of the UvrA(2)B(2) complex to a putative damaged site, the DNA wraps around one UvrB monomer. DNA wrap is dependent on ATP binding by UvrB and probably causes local melting of the DNA helix, facilitating insertion of UvrB beta-hairpin between the DNA strands. Then UvrB probes one DNA strand for the presence of a lesion. If a lesion is found the UvrA subunits dissociate and the UvrB-DNA preincision complex is formed. This complex is subsequently bound by UvrC and the second UvrB is released. If no lesion is found, the DNA wraps around the other UvrB subunit that will check the other stand for damage. In Mannheimia succiniciproducens (strain KCTC 0769BP / MBEL55E), this protein is UvrABC system protein B.